Reading from the N-terminus, the 280-residue chain is 2-dehydro-3-deoxyphosphooctonate aldolase (280 aa).

This sequence belongs to the KdsA family.

The protein localises to the cytoplasm. It carries out the reaction D-arabinose 5-phosphate + phosphoenolpyruvate + H2O = 3-deoxy-alpha-D-manno-2-octulosonate-8-phosphate + phosphate. Its pathway is carbohydrate biosynthesis; 3-deoxy-D-manno-octulosonate biosynthesis; 3-deoxy-D-manno-octulosonate from D-ribulose 5-phosphate: step 2/3. It participates in bacterial outer membrane biogenesis; lipopolysaccharide biosynthesis. The protein is 2-dehydro-3-deoxyphosphooctonate aldolase of Rhizobium meliloti (strain 1021) (Ensifer meliloti).